Consider the following 400-residue polypeptide: Phosphoglycerate kinase (400 aa).

Residues 21–23, R36, 59–62, R119, and R160 contribute to the substrate site; these read DFN and HLGR. Residues K211, E329, and 356–359 each bind ATP; that span reads GGDS.

It belongs to the phosphoglycerate kinase family. As to quaternary structure, monomer.

Its subcellular location is the cytoplasm. The catalysed reaction is (2R)-3-phosphoglycerate + ATP = (2R)-3-phospho-glyceroyl phosphate + ADP. It functions in the pathway carbohydrate degradation; glycolysis; pyruvate from D-glyceraldehyde 3-phosphate: step 2/5. This is Phosphoglycerate kinase from Levilactobacillus brevis (strain ATCC 367 / BCRC 12310 / CIP 105137 / JCM 1170 / LMG 11437 / NCIMB 947 / NCTC 947) (Lactobacillus brevis).